We begin with the raw amino-acid sequence, 216 residues long: MAAGPRTSVLLAFTLLCLPWPQEAGAFPAMPLSSLFANAVLRAQHLHQLAADTYKEFERTYIPEGQRYSIQNAQAAFCFSETIPAPTGKDEAQQRSDVELLRFSLLLIQSWLGPVQFLSRVFTNSLVFGTSDRVYEKLKDLEEGIQALMRELEDGSPRAGQILRQTYDKFDTNLRSDDALLKNYGLLSCFKKDLHKAETYLRVMKCRRFVESSCAF.

The first 26 residues, 1–26, serve as a signal peptide directing secretion; that stretch reads MAAGPRTSVLLAFTLLCLPWPQEAGA. Residue H45 participates in Zn(2+) binding. C78 and C189 are oxidised to a cystine. S131 is subject to Phosphoserine. Residue E198 coordinates Zn(2+). C206 and C214 are oxidised to a cystine.

This sequence belongs to the somatotropin/prolactin family.

It localises to the secreted. Plays an important role in growth control. Its major role in stimulating body growth is to stimulate the liver and other tissues to secrete IGF1. It stimulates both the differentiation and proliferation of myoblasts. It also stimulates amino acid uptake and protein synthesis in muscle and other tissues. The sequence is that of Somatotropin (GH1) from Camelus dromedarius (Dromedary).